Here is a 367-residue protein sequence, read N- to C-terminus: Glutamate 5-kinase (367 aa).

Lys-9 contacts ATP. Substrate contacts are provided by Ser-49, Asp-136, and Asn-148. ATP contacts are provided by residues 168–169 (TD) and 210–216 (TGGMKSK). In terms of domain architecture, PUA spans 276 to 350 (SGQIEVDAGA…GMQSQDIQVR (75 aa)).

It belongs to the glutamate 5-kinase family.

It localises to the cytoplasm. It catalyses the reaction L-glutamate + ATP = L-glutamyl 5-phosphate + ADP. It functions in the pathway amino-acid biosynthesis; L-proline biosynthesis; L-glutamate 5-semialdehyde from L-glutamate: step 1/2. Its function is as follows. Catalyzes the transfer of a phosphate group to glutamate to form L-glutamate 5-phosphate. This chain is Glutamate 5-kinase, found in Bacillus cereus (strain G9842).